The sequence spans 448 residues: Antizyme inhibitor 1 (448 aa).

The protein belongs to the Orn/Lys/Arg decarboxylase class-II family. ODC antizyme inhibitor subfamily. Monomer. Interacts with OAZ1 and OAZ3; this interaction disrupts the interaction between the antizyme and ODC1. Post-translationally, ubiquitinated, leading to its proteasomal degradation; a process that is reduced in presence of antizyme OAZ1. In terms of tissue distribution, expressed in various tissues including liver, heart and kidney.

The protein localises to the nucleus. Antizyme inhibitor (AZI) protein that positively regulates ornithine decarboxylase (ODC) activity and polyamine uptake. AZI is an enzymatically inactive ODC homolog that counteracts the negative effect of ODC antizymes (AZs) OAZ1, OAZ2 and OAZ3 on ODC activity by competing with ODC for antizyme-binding. Inhibits antizyme-dependent ODC degradation and releases ODC monomers from their inactive complex with antizymes, leading to formation of the catalytically active ODC homodimer and restoring polyamine production. This chain is Antizyme inhibitor 1 (Azin1), found in Rattus norvegicus (Rat).